The chain runs to 1085 residues: Protein CROWDED NUCLEI 3 (1085 aa).

Coiled-coil stretches lie at residues 51 to 149 (DEAS…NDLK) and 185 to 695 (RERA…LDVL). Lys318 is covalently cross-linked (Glycyl lysine isopeptide (Lys-Gly) (interchain with G-Cter in ubiquitin)). Positions 404–411 (AKREAALE) match the Nuclear localization signal motif. A Glycyl lysine isopeptide (Lys-Gly) (interchain with G-Cter in ubiquitin) cross-link involves residue Lys661. A phosphoserine mark is found at Ser764, Ser787, Ser825, and Ser843. Disordered regions lie at residues 801–997 (TVKL…GKAE) and 1020–1077 (NNTG…SIGK). A compositionally biased stretch (basic and acidic residues) spans 813–825 (SLDRVSGEDHEPS). Basic residues predominate over residues 854–868 (RRGRGRGRGRGKSVR). The segment covering 877–897 (VSRDSKPSDGETPRKRQREQT) has biased composition (basic and acidic residues). At Ser910 the chain carries Phosphoserine. Positions 932-941 (VSQTPGQTRY) are enriched in polar residues. Over residues 949-995 (VGTEEDKAQASKGATEKQERVNDDIRKVPSPKETRTPPEGENRENGK) the composition is skewed to basic and acidic residues. Residues 1045-1066 (EEDDENISMIEEENEGEEEEET) show a composition bias toward acidic residues.

Belongs to the CRWN family. In terms of assembly, core component of the LINC complex which is composed of inner nuclear membrane SUN domain-containing proteins coupled to outer nuclear membrane WIP proteins, the nucleoskeletal CRWN/LINC proteins, and, possibly, KAKU4. In terms of tissue distribution, expressed at low levels in roots, leaves, flowers and flower stalks.

It is found in the nucleus membrane. The protein resides in the nucleus. It localises to the nucleoplasm. Its subcellular location is the cytoplasm. The protein localises to the nucleus lamina. In terms of biological role, component of SUN-protein-containing multivariate complexes also called LINC complexes which link the nucleoskeleton and cytoskeleton by providing versatile outer nuclear membrane attachment sites for cytoskeletal filaments. Required for nucleus structure organization (e.g. size and shape). This chain is Protein CROWDED NUCLEI 3, found in Arabidopsis thaliana (Mouse-ear cress).